The following is a 333-amino-acid chain: T-cell surface glycoprotein CD1b1 (333 aa).

The first 17 residues, 1–17 (MLLVALALLAFLFPAGD), serve as a signal peptide directing secretion. Residues 18-302 (TQNALQWPTS…LYWGHSISIG (285 aa)) lie on the Extracellular side of the membrane. 3 N-linked (GlcNAc...) asparagine glycosylation sites follow: asparagine 38, asparagine 75, and asparagine 146. 3 disulfide bridges follow: cysteine 120–cysteine 184, cysteine 149–cysteine 163, and cysteine 224–cysteine 279. Residues 197–295 (PDIQKQVKPD…LEGQDIILYW (99 aa)) enclose the Ig-like domain. A helical transmembrane segment spans residues 303-323 (WIILAVLVPCLIVLVLFVLWF). Over 324–333 (YRRWSYEDIL) the chain is Cytoplasmic. The Internalization signal signature appears at 329 to 332 (YEDI).

As to quaternary structure, heterodimer with B2M (beta-2-microglobulin). Interacts with saposin C.

The protein localises to the cell membrane. The protein resides in the endosome membrane. Its subcellular location is the lysosome membrane. Its function is as follows. Antigen-presenting protein that binds self and non-self lipid and glycolipid antigens and presents them to T-cell receptors on natural killer T-cells. The sequence is that of T-cell surface glycoprotein CD1b1 (CD1B1) from Cavia porcellus (Guinea pig).